Here is a 503-residue protein sequence, read N- to C-terminus: Aspartyl/glutamyl-tRNA(Asn/Gln) amidotransferase subunit B (503 aa).

It belongs to the GatB/GatE family. GatB subfamily. In terms of assembly, heterotrimer of A, B and C subunits.

It carries out the reaction L-glutamyl-tRNA(Gln) + L-glutamine + ATP + H2O = L-glutaminyl-tRNA(Gln) + L-glutamate + ADP + phosphate + H(+). The enzyme catalyses L-aspartyl-tRNA(Asn) + L-glutamine + ATP + H2O = L-asparaginyl-tRNA(Asn) + L-glutamate + ADP + phosphate + 2 H(+). Its function is as follows. Allows the formation of correctly charged Asn-tRNA(Asn) or Gln-tRNA(Gln) through the transamidation of misacylated Asp-tRNA(Asn) or Glu-tRNA(Gln) in organisms which lack either or both of asparaginyl-tRNA or glutaminyl-tRNA synthetases. The reaction takes place in the presence of glutamine and ATP through an activated phospho-Asp-tRNA(Asn) or phospho-Glu-tRNA(Gln). The chain is Aspartyl/glutamyl-tRNA(Asn/Gln) amidotransferase subunit B from Cereibacter sphaeroides (strain KD131 / KCTC 12085) (Rhodobacter sphaeroides).